Here is a 217-residue protein sequence, read N- to C-terminus: NADPH-dependent 3-demethoxyubiquinone 3-hydroxylase, mitochondrial (217 aa).

Residues 1–34 (MSCARALAACCLWRLRTGALQPLSAYGRRISVRF) constitute a mitochondrion transit peptide. Repeat copies occupy residues 48-129 (AVDR…TALL) and 130-217 (GKEG…SERL). Positions 48–217 (AVDRIIRVDH…KVAIYLSERL (170 aa)) are 2 X approximate tandem repeats. Arg51 provides a ligand contact to NADH. Fe cation is bound by residues Glu60, Glu90, His93, Glu142, Glu178, and His181. Lys208, Tyr212, and Arg216 together coordinate NADH.

Belongs to the COQ7 family. In terms of assembly, component of a multi-subunit COQ enzyme complex. Interacts with COQ8B and COQ6. Interacts with COQ9. It depends on Fe cation as a cofactor.

The protein resides in the mitochondrion inner membrane. It carries out the reaction a 5-methoxy-2-methyl-3-(all-trans-polyprenyl)benzoquinone + NADH + O2 = a 3-demethylubiquinone + NAD(+) + H2O. It participates in cofactor biosynthesis; ubiquinone biosynthesis. Catalyzes the hydroxylation of the 5-methoxy-2-methyl-3-(all-trans-polyprenyl)benzoquinone at the C6 position and participates in the biosynthesis of ubiquinone. Catalyzes the reaction through a substrate-mediated reduction pathway, whereby NADH shuttles electrons to 5-methoxy-2-methyl-3-(all-trans-decaprenyl)benzoquinone, which then transfers the electrons to the two Fe(3+) centers. The binding of 5-methoxy-2-methyl-3-(all-trans-polyprenyl)benzoquinone (DMQn) mediates reduction of the diiron center by nicotinamide adenine dinucleotide (NADH) and initiates oxygen activation for subsequent DMQ hydroxylation. The physiological substrates are 5-methoxy-2-methyl-3-(all-trans-nonaprenyl)benzoquinone (DMQ(9)) and 5-methoxy-2-methyl-3-(all-trans-decaprenyl)benzoquinone (DMQ(10)), however in vitro the enzyme does not have any specificity concerning the length of the polyprenyl tail, and accepts tails of various lengths with similar efficiency. Also has a structural role in the COQ enzyme complex, stabilizing other COQ polypeptides. Involved in lifespan determination in a ubiquinone-independent manner. Plays a role in modulating mitochondrial stress responses, acting in the nucleus, perhaps via regulating gene expression, independent of its characterized mitochondrial function in ubiquinone biosynthesis. This Bos taurus (Bovine) protein is NADPH-dependent 3-demethoxyubiquinone 3-hydroxylase, mitochondrial.